The chain runs to 295 residues: Glycine--tRNA ligase alpha subunit (295 aa).

Belongs to the class-II aminoacyl-tRNA synthetase family. Tetramer of two alpha and two beta subunits.

It is found in the cytoplasm. The catalysed reaction is tRNA(Gly) + glycine + ATP = glycyl-tRNA(Gly) + AMP + diphosphate. In Thermosynechococcus vestitus (strain NIES-2133 / IAM M-273 / BP-1), this protein is Glycine--tRNA ligase alpha subunit.